The sequence spans 715 residues: Probable serine/threonine-protein kinase MARK-B (715 aa).

Over residues 24–37 the composition is skewed to low complexity; that stretch reads SCSSNSTTSSSSNS. Residues 24-65 form a disordered region; sequence SCSSNSTTSSSSNSPKQNKVSPGYRNKPQQQQHKKGHKMGNY. Positions 65–320 constitute a Protein kinase domain; sequence YLLGKTIGSG…LDEIKTHVWV (256 aa). ATP is bound by residues 71-79 and K94; that span reads IGSGTSSKV. D187 serves as the catalytic Proton acceptor. Over residues 335-344 the composition is skewed to basic and acidic residues; that stretch reads KVSDRLEKEQ. Disordered stretches follow at residues 335–399 and 446–530; these read KVSD…IPQN and CSAP…HHST. Over residues 345–368 the composition is skewed to low complexity; sequence QQQTPQHQQTQQQLQPQSQLQQHS. Polar residues predominate over residues 381–399; sequence IGSNRPLNQSSPNLTIPQN. Composition is skewed to low complexity over residues 451–478 and 487–513; these read SPHS…LSVS and SSNP…INTS. The segment covering 517-527 has biased composition (basic residues); that stretch reads QYHHHHHHQNH. One can recognise a KA1 domain in the interval 666-715; the sequence is LCPRNETINFEIEVCKVNGMDMYGIKFKRLSGDAWSYSSSCIKIVESLKL.

Belongs to the protein kinase superfamily. CAMK Ser/Thr protein kinase family. SNF1 subfamily.

The enzyme catalyses L-seryl-[protein] + ATP = O-phospho-L-seryl-[protein] + ADP + H(+). It catalyses the reaction L-threonyl-[protein] + ATP = O-phospho-L-threonyl-[protein] + ADP + H(+). The protein is Probable serine/threonine-protein kinase MARK-B (mrkB) of Dictyostelium discoideum (Social amoeba).